Consider the following 115-residue polypeptide: Nucleoid-associated protein Ava_2322 (115 aa).

The protein belongs to the YbaB/EbfC family. As to quaternary structure, homodimer.

It localises to the cytoplasm. Its subcellular location is the nucleoid. In terms of biological role, binds to DNA and alters its conformation. May be involved in regulation of gene expression, nucleoid organization and DNA protection. The protein is Nucleoid-associated protein Ava_2322 of Trichormus variabilis (strain ATCC 29413 / PCC 7937) (Anabaena variabilis).